A 363-amino-acid chain; its full sequence is Carbamoyl phosphate synthase small chain (363 aa).

The interval 1–173 (MMKAFLVLDN…SKYIFGTHTG (173 aa)) is CPSase. Positions 46, 225, and 227 each coordinate L-glutamine. The 187-residue stretch at 177-363 (KLAVYDYGVK…YDLVEKTKKG (187 aa)) folds into the Glutamine amidotransferase type-1 domain. Residue Cys-253 is the Nucleophile of the active site. The L-glutamine site is built by Leu-254, Gln-257, Asn-295, Gly-297, and Phe-298. Catalysis depends on residues His-336 and Glu-338.

Belongs to the CarA family. In terms of assembly, composed of two chains; the small (or glutamine) chain promotes the hydrolysis of glutamine to ammonia, which is used by the large (or ammonia) chain to synthesize carbamoyl phosphate. Tetramer of heterodimers (alpha,beta)4.

The catalysed reaction is hydrogencarbonate + L-glutamine + 2 ATP + H2O = carbamoyl phosphate + L-glutamate + 2 ADP + phosphate + 2 H(+). It catalyses the reaction L-glutamine + H2O = L-glutamate + NH4(+). Its pathway is amino-acid biosynthesis; L-arginine biosynthesis; carbamoyl phosphate from bicarbonate: step 1/1. It functions in the pathway pyrimidine metabolism; UMP biosynthesis via de novo pathway; (S)-dihydroorotate from bicarbonate: step 1/3. In terms of biological role, small subunit of the glutamine-dependent carbamoyl phosphate synthetase (CPSase). CPSase catalyzes the formation of carbamoyl phosphate from the ammonia moiety of glutamine, carbonate, and phosphate donated by ATP, constituting the first step of 2 biosynthetic pathways, one leading to arginine and/or urea and the other to pyrimidine nucleotides. The small subunit (glutamine amidotransferase) binds and cleaves glutamine to supply the large subunit with the substrate ammonia. This is Carbamoyl phosphate synthase small chain from Leptospira interrogans serogroup Icterohaemorrhagiae serovar copenhageni (strain Fiocruz L1-130).